An 856-amino-acid chain; its full sequence is Valine--tRNA ligase (856 aa).

Residues 47 to 57 (PTASGVLHIGH) carry the 'HIGH' region motif. A 'KMSKS' region motif is present at residues 578-582 (KMSKS). ATP is bound at residue K581.

Belongs to the class-I aminoacyl-tRNA synthetase family. ValS type 2 subfamily. Monomer.

The protein localises to the cytoplasm. The catalysed reaction is tRNA(Val) + L-valine + ATP = L-valyl-tRNA(Val) + AMP + diphosphate. Catalyzes the attachment of valine to tRNA(Val). As ValRS can inadvertently accommodate and process structurally similar amino acids such as threonine, to avoid such errors, it has a 'posttransfer' editing activity that hydrolyzes mischarged Thr-tRNA(Val) in a tRNA-dependent manner. This is Valine--tRNA ligase from Tropheryma whipplei (strain TW08/27) (Whipple's bacillus).